A 797-amino-acid polypeptide reads, in one-letter code: Xaa-Pro dipeptidyl-peptidase (797 aa).

Active-site charge relay system residues include S370, D490, and H521.

The protein belongs to the peptidase S15 family. In terms of assembly, homodimer.

The protein resides in the cytoplasm. It carries out the reaction Hydrolyzes Xaa-Pro-|- bonds to release unblocked, N-terminal dipeptides from substrates including Ala-Pro-|-p-nitroanilide and (sequentially) Tyr-Pro-|-Phe-Pro-|-Gly-Pro-|-Ile.. Functionally, removes N-terminal dipeptides sequentially from polypeptides having unsubstituted N-termini provided that the penultimate residue is proline. This chain is Xaa-Pro dipeptidyl-peptidase, found in Lacticaseibacillus casei (strain BL23) (Lactobacillus casei).